The chain runs to 86 residues: Short neurotoxin homolog NTL1 (86 aa).

Positions 1-21 are cleaved as a signal peptide; the sequence is MKTLLLSLVVLTIACLDLGYT. 4 disulfide bridges follow: C24–C45, C38–C62, C66–C78, and C79–C84.

As to expression, expressed by the venom gland.

Its subcellular location is the secreted. The sequence is that of Short neurotoxin homolog NTL1 from Bungarus multicinctus (Many-banded krait).